The chain runs to 169 residues: Protein ORFb in retron Ec67 (169 aa).

The polypeptide is Protein ORFb in retron Ec67 (Escherichia coli).